The chain runs to 247 residues: Isoprenyl transferase (247 aa).

Aspartate 18 is a catalytic residue. Aspartate 18 lines the Mg(2+) pocket. Residues 19–22, tryptophan 23, arginine 31, histidine 35, and 63–65 contribute to the substrate site; these read GNGR and SSE. Asparagine 66 serves as the catalytic Proton acceptor. Substrate contacts are provided by residues tryptophan 67, arginine 69, arginine 186, and 192–194; that span reads RLS. A Mg(2+)-binding site is contributed by glutamate 205.

It belongs to the UPP synthase family. As to quaternary structure, homodimer. It depends on Mg(2+) as a cofactor.

Functionally, catalyzes the condensation of isopentenyl diphosphate (IPP) with allylic pyrophosphates generating different type of terpenoids. This chain is Isoprenyl transferase, found in Agrobacterium fabrum (strain C58 / ATCC 33970) (Agrobacterium tumefaciens (strain C58)).